We begin with the raw amino-acid sequence, 299 residues long: Pantothenate synthetase (299 aa).

Residue 41–48 (MGALHEGH) coordinates ATP. The active-site Proton donor is His48. Gln72 contacts (R)-pantoate. Gln72 is a binding site for beta-alanine. ATP is bound at residue 158–161 (GQKD). (R)-pantoate is bound at residue Gln164. ATP is bound by residues Val187 and 195-198 (MSSR).

It belongs to the pantothenate synthetase family. Homodimer.

It is found in the cytoplasm. It catalyses the reaction (R)-pantoate + beta-alanine + ATP = (R)-pantothenate + AMP + diphosphate + H(+). It participates in cofactor biosynthesis; (R)-pantothenate biosynthesis; (R)-pantothenate from (R)-pantoate and beta-alanine: step 1/1. In terms of biological role, catalyzes the condensation of pantoate with beta-alanine in an ATP-dependent reaction via a pantoyl-adenylate intermediate. The protein is Pantothenate synthetase of Acidobacterium capsulatum (strain ATCC 51196 / DSM 11244 / BCRC 80197 / JCM 7670 / NBRC 15755 / NCIMB 13165 / 161).